The chain runs to 861 residues: Seed linoleate 9S-lipoxygenase-3 (861 aa).

Residues 41–166 enclose the PLAT domain; the sequence is QGFDILGSTV…HHKIDRIFFA (126 aa). The 693-residue stretch at 169–861 folds into the Lipoxygenase domain; the sequence is TYLPSETPAP…FRGIPNSISI (693 aa). A disordered region spans residues 215–257; that stretch reads NPDSGENHARPVLGGSETYPYPRRGRTGRKPTRKDPNSESRSD. Basic residues predominate over residues 237–246; the sequence is RRGRTGRKPT. The span at 247–257 shows a compositional bias: basic and acidic residues; sequence RKDPNSESRSD. His-522, His-527, His-713, Asn-717, and Ile-861 together coordinate Fe cation.

This sequence belongs to the lipoxygenase family. Fe cation is required as a cofactor.

The protein localises to the cytoplasm. It carries out the reaction (9Z,12Z)-octadecadienoate + O2 = (9S)-hydroperoxy-(10E,12Z)-octadecadienoate. It functions in the pathway lipid metabolism; oxylipin biosynthesis. Its function is as follows. Plant lipoxygenase may be involved in a number of diverse aspects of plant physiology including growth and development, pest resistance, and senescence or responses to wounding. It catalyzes the hydroperoxidation of lipids containing a cis,cis-1,4-pentadiene structure. This chain is Seed linoleate 9S-lipoxygenase-3 (LOX1.3), found in Pisum sativum (Garden pea).